The sequence spans 328 residues: Bidirectional sugar transporter SWEET16 (328 aa).

Residues 1-5 (MADPS) lie on the Extracellular side of the membrane. A helical transmembrane segment spans residues 6–26 (FFVGIVGNVISILVFASPIAT). Residues 6–92 (FFVGIVGNVI…TLYLAYAPRE (87 aa)) form the MtN3/slv 1 domain. Residues 27–38 (FRRIVRSKSTEE) are Cytoplasmic-facing. The chain crosses the membrane as a helical span at residues 39–56 (FRWLPYVTTLLSTSLWTF). Residues 57 to 63 (YGLHKPG) lie on the Extracellular side of the membrane. Residues 64–84 (GLLIVTVNGSGAALEAIYVTL) form a helical membrane-spanning segment. The Cytoplasmic portion of the chain corresponds to 85-99 (YLAYAPRETKAKMVK). The helical transmembrane segment at 100–120 (VVLAVNVGALAAVVAVALVAL) threads the bilayer. At 121–125 (HGGVR) the chain is on the extracellular side. The chain crosses the membrane as a helical span at residues 126–146 (LFVVGVLCAALTIGMYAAPMA). In terms of domain architecture, MtN3/slv 2 spans 127 to 213 (FVVGVLCAAL…LYMAYRRTKK (87 aa)). Residues 147–161 (AMRTVVKTRSVEYMP) are Cytoplasmic-facing. The chain crosses the membrane as a helical span at residues 162–182 (FSLSFFLFLNGGVWSVYSLLV). Residues 183-185 (KDY) are Extracellular-facing. The helical transmembrane segment at 186 to 206 (FIGIPNAIGFALGTAQLALYM) threads the bilayer. At 207-328 (AYRRTKKPAG…ATTAGPGDRH (122 aa)) the chain is on the cytoplasmic side. Residues 288-299 (HQHHGGHHHHHR) are compositionally biased toward basic residues. Positions 288-328 (HQHHGGHHHHHRFDTVPDDDDEAVAAGGTTPATTAGPGDRH) are disordered. Residues 312–328 (AAGGTTPATTAGPGDRH) are compositionally biased toward low complexity.

The protein belongs to the SWEET sugar transporter family. Forms homooligomers and/or heterooligomers.

It is found in the cell membrane. In terms of biological role, mediates both low-affinity uptake and efflux of sugar across the plasma membrane. This chain is Bidirectional sugar transporter SWEET16 (SWEET16), found in Oryza sativa subsp. japonica (Rice).